A 254-amino-acid chain; its full sequence is Glutathione S-transferase F14 (254 aa).

A GST N-terminal domain is found at 4-85 (SKMKLHCGFI…YLAEQYKDVG (82 aa)). Glutathione is bound by residues 42–43 (AK), 56–57 (EV), and 69–70 (EP). One can recognise a GST C-terminal domain in the interval 92–231 (DPKKRAIMSM…DLMKQRRLPI (140 aa)).

The protein belongs to the GST superfamily. Phi family.

It is found in the cytoplasm. Its subcellular location is the cytosol. It carries out the reaction RX + glutathione = an S-substituted glutathione + a halide anion + H(+). Functionally, may be involved in the conjugation of reduced glutathione to a wide number of exogenous and endogenous hydrophobic electrophiles and have a detoxification role against certain herbicides. The chain is Glutathione S-transferase F14 from Arabidopsis thaliana (Mouse-ear cress).